Reading from the N-terminus, the 331-residue chain is Beta-ketoacyl-[acyl-carrier-protein] synthase III (331 aa).

Active-site residues include Cys113 and His253. The ACP-binding stretch occupies residues 254-258; it reads QANTR. The active site involves Asn283.

Belongs to the thiolase-like superfamily. FabH family. As to quaternary structure, homodimer.

Its subcellular location is the cytoplasm. It catalyses the reaction malonyl-[ACP] + acetyl-CoA + H(+) = 3-oxobutanoyl-[ACP] + CO2 + CoA. The protein operates within lipid metabolism; fatty acid biosynthesis. In terms of biological role, catalyzes the condensation reaction of fatty acid synthesis by the addition to an acyl acceptor of two carbons from malonyl-ACP. Catalyzes the first condensation reaction which initiates fatty acid synthesis and may therefore play a role in governing the total rate of fatty acid production. Possesses both acetoacetyl-ACP synthase and acetyl transacylase activities. Its substrate specificity determines the biosynthesis of branched-chain and/or straight-chain of fatty acids. This chain is Beta-ketoacyl-[acyl-carrier-protein] synthase III, found in Desulfitobacterium hafniense (strain Y51).